The following is a 124-amino-acid chain: Small ribosomal subunit protein bS6 (124 aa).

The interval 96-124 (ETGPSPMMKEVQREEAKKAAAAQPTEAQA) is disordered. Residues 114-124 (AAAAQPTEAQA) show a composition bias toward low complexity.

Belongs to the bacterial ribosomal protein bS6 family.

Functionally, binds together with bS18 to 16S ribosomal RNA. This Burkholderia mallei (strain ATCC 23344) protein is Small ribosomal subunit protein bS6.